We begin with the raw amino-acid sequence, 210 residues long: Chloramphenicol acetyltransferase (210 aa).

His79 is an active-site residue.

It belongs to the transferase hexapeptide repeat family.

It carries out the reaction chloramphenicol + acetyl-CoA = chloramphenicol 3-acetate + CoA. Functionally, this enzyme is an effector of chloramphenicol resistance in bacteria. The sequence is that of Chloramphenicol acetyltransferase (catB2) from Escherichia coli.